A 149-amino-acid chain; its full sequence is Deoxyuridine 5'-triphosphate nucleotidohydrolase (149 aa).

Residues 66–68, Asn79, 83–85, and Lys93 contribute to the substrate site; these read RSG and TID.

The protein belongs to the dUTPase family. Requires Mg(2+) as cofactor.

It carries out the reaction dUTP + H2O = dUMP + diphosphate + H(+). It participates in pyrimidine metabolism; dUMP biosynthesis; dUMP from dCTP (dUTP route): step 2/2. This enzyme is involved in nucleotide metabolism: it produces dUMP, the immediate precursor of thymidine nucleotides and it decreases the intracellular concentration of dUTP so that uracil cannot be incorporated into DNA. The chain is Deoxyuridine 5'-triphosphate nucleotidohydrolase from Corynebacterium glutamicum (strain ATCC 13032 / DSM 20300 / JCM 1318 / BCRC 11384 / CCUG 27702 / LMG 3730 / NBRC 12168 / NCIMB 10025 / NRRL B-2784 / 534).